The chain runs to 98 residues: uncharacterized protein (98 aa).

Over residues methionine 1–proline 21 the composition is skewed to low complexity. Residues methionine 1–aspartate 26 form a disordered region. Residues methionine 29–cysteine 49 form a helical membrane-spanning segment.

The protein resides in the host membrane. This is an uncharacterized protein from Equine herpesvirus 2 (strain 86/87) (EHV-2).